The following is a 270-amino-acid chain: Putative pyruvate, phosphate dikinase regulatory protein (270 aa).

148–155 lines the ADP pocket; sequence GISRTSKT.

The protein belongs to the pyruvate, phosphate/water dikinase regulatory protein family. PDRP subfamily.

The enzyme catalyses N(tele)-phospho-L-histidyl/L-threonyl-[pyruvate, phosphate dikinase] + ADP = N(tele)-phospho-L-histidyl/O-phospho-L-threonyl-[pyruvate, phosphate dikinase] + AMP + H(+). It catalyses the reaction N(tele)-phospho-L-histidyl/O-phospho-L-threonyl-[pyruvate, phosphate dikinase] + phosphate + H(+) = N(tele)-phospho-L-histidyl/L-threonyl-[pyruvate, phosphate dikinase] + diphosphate. Bifunctional serine/threonine kinase and phosphorylase involved in the regulation of the pyruvate, phosphate dikinase (PPDK) by catalyzing its phosphorylation/dephosphorylation. The chain is Putative pyruvate, phosphate dikinase regulatory protein from Bacillus cereus (strain 03BB102).